Consider the following 548-residue polypeptide: SH2B adapter protein 3 (548 aa).

Polar residues predominate over residues 1–11 (MNEPTVQPSRT). Disordered stretches follow at residues 1–25 (MNEPTVQPSRTSSAPASPASPRGWS), 78–108 (SLAGPPGHDYRATAPPRPALPKARSSEDLGP), and 128–160 (RSAGELPGATSDTNDIDTTAASRPGPARKLLPW). A compositionally biased stretch (low complexity) spans 12–21 (SSAPASPASP). A phosphoserine mark is found at S13, S102, and S129. A compositionally biased stretch (polar residues) spans 137–148 (TSDTNDIDTTAA). Positions 168-279 (EALKEVVLRY…WLAELRASTG (112 aa)) constitute a PH domain. The segment at 290–313 (PLSLAAEPGPARSPRGSTDSLDQG) is disordered. The residue at position 302 (S302) is a Phosphoserine. The SH2 domain maps to 336–434 (WFHGPISRVR…ACDVRLSGYV (99 aa)).

The protein belongs to the SH2B adapter family. Tyrosine phosphorylated.

Functionally, links T-cell receptor activation signal to phospholipase C-gamma-1, GRB2 and phosphatidylinositol 3-kinase. In Mus musculus (Mouse), this protein is SH2B adapter protein 3 (Sh2b3).